A 348-amino-acid chain; its full sequence is D-alanine--D-alanine ligase (348 aa).

The region spanning 132–334 (KRVLESAGIP…YSDLIEELVS (203 aa)) is the ATP-grasp domain. ATP is bound at residue 162-217 (LETLSFPIFVKPANMGSSVGISKAESIEGLREAIALALKYDSRILIEQGVVAREIE). Mg(2+) is bound by residues Asp288, Glu301, and Asn303.

Belongs to the D-alanine--D-alanine ligase family. Mg(2+) is required as a cofactor. Requires Mn(2+) as cofactor.

The protein resides in the cytoplasm. It carries out the reaction 2 D-alanine + ATP = D-alanyl-D-alanine + ADP + phosphate + H(+). It participates in cell wall biogenesis; peptidoglycan biosynthesis. Cell wall formation. The chain is D-alanine--D-alanine ligase from Streptococcus uberis (strain ATCC BAA-854 / 0140J).